A 116-amino-acid polypeptide reads, in one-letter code: Vesicle-associated membrane protein 2 (116 aa).

A disordered region spans residues 1–28 (MSATAATVPPAAPAGEGGPPAPPPNLTS). Position 2 is an N-acetylserine (Ser-2). Residues 2–94 (SATAATVPPA…KRKYWWKNLK (93 aa)) are Cytoplasmic-facing. Residues 31 to 91 (RLQQTQAQVD…AKLKRKYWWK (61 aa)) form the v-SNARE coiled-coil homology domain. The tract at residues 92-116 (NLKMMIILGVICAIILIIIIVYFST) is required for interaction with SEPT8. A helical; Anchor for type IV membrane protein membrane pass occupies residues 95–114 (MMIILGVICAIILIIIIVYF). Residues 115 to 116 (ST) are Vesicular-facing.

Belongs to the synaptobrevin family. In terms of assembly, part of the SNARE core complex containing SNAP25, VAMP2 and STX1A; this complex constitutes the basic catalytic machinery of the complex neurotransmitter release apparatus. Recruited to the SNARE complex following binding of the SNARE complex component STX1A to STXBP1. This complex binds to CPLX1. Interacts with VAPA and VAPB. Interacts (via N-terminus) with KCNB1 (via N-terminus and C-terminus); stimulates the channel inactivation rate of KCNB1. Interacts with POPDC1 and STX4. Interacts with WDFY2, PRKCZ and PRKCI. Forms a complex with WDFY2 and PRKCZ. Interacts with SEPT8; the interaction inhibits interaction of VAMP2 with SYP. Interacts with SYP; the interaction is inhibited by interaction with SEPT8. Interacts with PICALM. Interacts with alpha-synuclein/SNCA. Interacts with STX3 isoform 3B. Phosphorylated by PRKCZ in vitro and this phosphorylation is increased in the presence of WDFY2. In terms of processing, (Microbial infection) Targeted and hydrolyzed by C.botulinum neurotoxin type B (BoNT/B, botB); 20 hours after treatment of spinal cord cells almost all the protein has been digested. BoNT/B hydrolyzes the 76-Gln-|-Phe-77 bond and inhibits neurotransmitter release. Post-translationally, (Microbial infection) Targeted and hydrolyzed by C.tetani toxin (tetX); 20 hours after treatment of spinal cord cells almost all the protein has been digested. Tetanus toxin hydrolyzes the 76-Gln-|-Phe-77 bond and inhibits neurotransmitter release. In terms of tissue distribution, expressed in the outer plexiform layer of the retina (at protein level).

The protein localises to the cytoplasmic vesicle. It is found in the secretory vesicle. It localises to the synaptic vesicle membrane. The protein resides in the cell membrane. Its function is as follows. Involved in the targeting and/or fusion of transport vesicles to their target membrane. Major SNARE protein of synaptic vesicles which mediates fusion of synaptic vesicles to release neurotransmitters. Essential for fast vesicular exocytosis and activity-dependent neurotransmitter release as well as fast endocytosis that mediates rapid reuse of synaptic vesicles. Modulates the gating characteristics of the delayed rectifier voltage-dependent potassium channel KCNB1. This Mus musculus (Mouse) protein is Vesicle-associated membrane protein 2 (Vamp2).